The primary structure comprises 67 residues: UPF0434 protein Bphy_0537 (67 aa).

It belongs to the UPF0434 family.

The chain is UPF0434 protein Bphy_0537 from Paraburkholderia phymatum (strain DSM 17167 / CIP 108236 / LMG 21445 / STM815) (Burkholderia phymatum).